A 1411-amino-acid polypeptide reads, in one-letter code: DNA-directed RNA polymerase subunit beta' (1411 aa).

Zn(2+)-binding residues include Cys70, Cys72, Cys85, and Cys88. Asp458, Asp460, and Asp462 together coordinate Mg(2+). Positions 813, 887, 894, and 897 each coordinate Zn(2+). Positions Ala1384 to Glu1411 are disordered.

It belongs to the RNA polymerase beta' chain family. In terms of assembly, the RNAP catalytic core consists of 2 alpha, 1 beta, 1 beta' and 1 omega subunit. When a sigma factor is associated with the core the holoenzyme is formed, which can initiate transcription. Mg(2+) serves as cofactor. Requires Zn(2+) as cofactor.

It carries out the reaction RNA(n) + a ribonucleoside 5'-triphosphate = RNA(n+1) + diphosphate. Its function is as follows. DNA-dependent RNA polymerase catalyzes the transcription of DNA into RNA using the four ribonucleoside triphosphates as substrates. This Paracidovorax citrulli (strain AAC00-1) (Acidovorax citrulli) protein is DNA-directed RNA polymerase subunit beta'.